The primary structure comprises 140 residues: Ribosome-binding factor A (140 aa).

Positions 115-140 (EDERQQRGDIPPGSDQQPGSDEQPTG) are disordered. Over residues 128-140 (SDQQPGSDEQPTG) the composition is skewed to polar residues.

The protein belongs to the RbfA family. Monomer. Binds 30S ribosomal subunits, but not 50S ribosomal subunits or 70S ribosomes.

It is found in the cytoplasm. In terms of biological role, one of several proteins that assist in the late maturation steps of the functional core of the 30S ribosomal subunit. Associates with free 30S ribosomal subunits (but not with 30S subunits that are part of 70S ribosomes or polysomes). Required for efficient processing of 16S rRNA. May interact with the 5'-terminal helix region of 16S rRNA. This Synechococcus sp. (strain CC9605) protein is Ribosome-binding factor A.